Consider the following 154-residue polypeptide: Jupiter microtubule associated homolog 1 (154 aa).

M1 carries the N-acetylmethionine modification. Residues 1-19 (MTTTTTFKGVDPNSRNSSR) show a composition bias toward polar residues. Residues 1–154 (MTTTTTFKGV…PGGKSSLVLG (154 aa)) are disordered. N-acetylthreonine; in Hematological and neurological expressed 1 protein, N-terminally processed is present on T2. 2 positions are modified to phosphoserine: S28 and S31. Position 54 is a phosphothreonine (T54). S71, S87, S88, and S92 each carry phosphoserine. The span at 79-91 (SPGTQRSNSSEAS) shows a compositional bias: polar residues. Residues 96–108 (LDLKGEGDMHENV) are compositionally biased toward basic and acidic residues. Residues 125–138 (PAAPVPSPVAPAPV) show a composition bias toward pro residues. Phosphoserine is present on S131. Residue K148 is modified to N6-acetyllysine.

It belongs to the JUPITER family. In terms of assembly, interacts with the complex composed, at least, of APC, CTNNB1 and GSK3B; the interaction takes place with the inactive form of GSK3B (phosphorylated at 'Ser-9'). Expressed in yolk sac, fetal brain, brain, spleen and bone marrow.

It is found in the nucleus. The protein localises to the cytoplasm. Modulates negatively AKT-mediated GSK3B signaling. Induces CTNNB1 'Ser-33' phosphorylation and degradation through the suppression of the inhibitory 'Ser-9' phosphorylation of GSK3B, which represses the function of the APC:CTNNB1:GSK3B complex and the interaction with CDH1/E-cadherin in adherent junctions. Plays a role in the regulation of cell cycle and cell adhesion. Has an inhibitory role on AR-signaling pathway through the induction of receptor proteasomal degradation. The chain is Jupiter microtubule associated homolog 1 from Mus musculus (Mouse).